Reading from the N-terminus, the 387-residue chain is S-adenosylmethionine synthase (387 aa).

Residue His-16 participates in ATP binding. Asp-18 is a Mg(2+) binding site. Glu-44 provides a ligand contact to K(+). Positions 57 and 100 each coordinate L-methionine. The tract at residues 100–110 (QSPDIAQGVDR) is flexible loop. Residues 167–169 (DAK), 232–233 (RF), Asp-241, 247–248 (RK), Ala-264, and Lys-268 contribute to the ATP site. Residue Asp-241 participates in L-methionine binding. Lys-272 contacts L-methionine.

It belongs to the AdoMet synthase family. In terms of assembly, homotetramer; dimer of dimers. Mg(2+) is required as a cofactor. The cofactor is K(+).

The protein localises to the cytoplasm. It carries out the reaction L-methionine + ATP + H2O = S-adenosyl-L-methionine + phosphate + diphosphate. Its pathway is amino-acid biosynthesis; S-adenosyl-L-methionine biosynthesis; S-adenosyl-L-methionine from L-methionine: step 1/1. Functionally, catalyzes the formation of S-adenosylmethionine (AdoMet) from methionine and ATP. The overall synthetic reaction is composed of two sequential steps, AdoMet formation and the subsequent tripolyphosphate hydrolysis which occurs prior to release of AdoMet from the enzyme. In Cupriavidus pinatubonensis (strain JMP 134 / LMG 1197) (Cupriavidus necator (strain JMP 134)), this protein is S-adenosylmethionine synthase.